The sequence spans 305 residues: METERRIITSCSAMTALFLFMTALMASSSIAATPTQSFEDNFNIMWSENHFTTSDDGEIWNLSLDNDTGCGFQTKHMYRFGWFSMKLKLVGGDSAGVVTAYYMCSENGAGPERDEIDFEFLGNRTGQPYIIQTNVYKNGTGNREMRHSLWFDPTKDYHTYSILWNNHQLVFFVDRVPIRVYKNSDKVPNNDFFPNQKPMYLFSSIWNADDWATRGGLEKTDWKKAPFVSSYKDFAVEGCRWKDPFPACVSTTTENWWDQYDAWHLSKTQKMDYAWVQRNLVVYDYCKDSERFPTLPWECSISPWA.

The first 31 residues, 1 to 31 (METERRIITSCSAMTALFLFMTALMASSSIA), serve as a signal peptide directing secretion. The GH16 domain maps to 32 to 231 (ATPTQSFEDN…WKKAPFVSSY (200 aa)). Residues N61 and N66 are each glycosylated (N-linked (GlcNAc...) asparagine). E115 functions as the Nucleophile in the catalytic mechanism. The active-site Proton donor is E119. E119 contacts xyloglucan. The N-linked (GlcNAc...) asparagine glycan is linked to N123. 132–134 (QTN) is a xyloglucan binding site. N-linked (GlcNAc...) asparagine glycosylation occurs at N138. Residues 142 to 144 (NRE), 210 to 211 (DW), and G215 each bind xyloglucan. 2 disulfide bridges follow: C239–C248 and C286–C299. R291 is a binding site for xyloglucan.

Belongs to the glycosyl hydrolase 16 family. XTH group 1 subfamily. Contains at least one intrachain disulfide bond essential for its enzymatic activity.

The protein resides in the secreted. Its subcellular location is the cell wall. It localises to the extracellular space. The protein localises to the apoplast. It catalyses the reaction breaks a beta-(1-&gt;4) bond in the backbone of a xyloglucan and transfers the xyloglucanyl segment on to O-4 of the non-reducing terminal glucose residue of an acceptor, which can be a xyloglucan or an oligosaccharide of xyloglucan.. Functionally, catalyzes xyloglucan endohydrolysis (XEH) and/or endotransglycosylation (XET). Cleaves and religates xyloglucan polymers, an essential constituent of the primary cell wall, and thereby participates in cell wall construction of growing tissues. This Arabidopsis thaliana (Mouse-ear cress) protein is Probable xyloglucan endotransglucosylase/hydrolase protein 8 (XTH8).